The sequence spans 316 residues: Universal stress protein E (316 aa).

The protein belongs to the universal stress protein A family.

The protein resides in the cytoplasm. Its function is as follows. Required for resistance to DNA-damaging agents. The polypeptide is Universal stress protein E (uspE) (Escherichia coli O157:H7).